Consider the following 588-residue polypeptide: D-3-phosphoglycerate dehydrogenase 3, chloroplastic (588 aa).

Residues 1–38 (MATSLNLSSIFSSSSRLVTTPSSVFPIRQRRRIILVTS) constitute a chloroplast transit peptide. Residues 195 to 196 (KV), Asp-215, 274 to 276 (VAR), and Asp-300 each bind NAD(+). The active site involves Arg-276. The active site involves Glu-305. The active-site Proton donor is His-324. NAD(+) is bound at residue 324–327 (HLGA). Residues 516–588 (VILCRQVDQP…AIEEFVFLKL (73 aa)) form the ACT domain.

It belongs to the D-isomer specific 2-hydroxyacid dehydrogenase family. In terms of tissue distribution, expressed in aerial parts. Not detected in roots and meristematic tissue. Expressed in cotyledons, adult leaves, stigma and anther filaments. Detected in the embryo.

Its subcellular location is the plastid. The protein localises to the chloroplast. The catalysed reaction is (2R)-3-phosphoglycerate + NAD(+) = 3-phosphooxypyruvate + NADH + H(+). It participates in amino-acid biosynthesis; L-serine biosynthesis; L-serine from 3-phospho-D-glycerate: step 1/3. Its activity is regulated as follows. Partially inhibited by 1 mM serine. In terms of biological role, involved in the plastidial phosphorylated pathway of serine biosynthesis (PPSB). This is D-3-phosphoglycerate dehydrogenase 3, chloroplastic (PGDH3) from Arabidopsis thaliana (Mouse-ear cress).